Reading from the N-terminus, the 1368-residue chain is MAP3K epsilon protein kinase 1 (1368 aa).

The region spanning 20–274 (YMLGDEIGKG…AKTLLSHPWI (255 aa)) is the Protein kinase domain. HEAT repeat units lie at residues 25–62 (EIGKGAYGRVYKGLDLENGDFVAIKQVSLENIVQEDLN) and 86–125 (SKTKTHLHIILEYVENGSLANIIKPNKFGPFPESLVAVYI). Residues 26 to 34 (IGKGAYGRV) and Lys49 contribute to the ATP site. Asp144 serves as the catalytic Proton acceptor. Residues 218 to 256 (PYYDLQPMPALFRIVQDDNPPIPDSLSPDITDFLRQCFK) form an HEAT 3 repeat. Disordered regions lie at residues 296–415 (EATA…KNTS) and 430–507 (QTSH…PVAD). The segment covering 351 to 364 (LGEEGTDNSEDDIM) has biased composition (acidic residues). Basic and acidic residues-rich tracts occupy residues 388–399 (SDFHGKSERGET) and 470–486 (SLHDLFHPLDKVSEGKP). A compositionally biased stretch (polar residues) spans 488-502 (EASTSMPTSNVNQGD). HEAT repeat units lie at residues 533-571 (SNDGGDLFRLMMGVLKDDVIDIDGLVFDEKVPAENLFPL), 628-653 (IPKSRVICAVLQLINEIIKDNTDFQE), 654-695 (NACL…SSPL), 699-737 (MFIACRGIPVLVGFLEADYAKYREMVHLAIDGMWQVFKL), and 750-788 (AAKNGILLRLINTLYSLNEATRLASISGGLDGQAPRVRS). Residues 777-883 (GGLDGQAPRV…ISLSANRTST (107 aa)) form a disordered region. The segment covering 791-808 (LDPNNPIFGQNETSSLSM) has biased composition (polar residues). Basic and acidic residues-rich tracts occupy residues 813 to 826 (DVLKTRHGGGEEPS) and 836 to 852 (SDVHQPDALHPDGDKPR). HEAT repeat units follow at residues 903–940 (EQVRPLLSLLDKEPPSRHYSGQLDYVKHITGIERHESR), 1025–1063 (ATSSGLLAHMVSTLSADVAREYLEKVADLLLEFARADTT), 1067–1105 (YMCSQSLLSRLFQMFNRVEPPILLKILECTNHLSTDPNC), 1112–1150 (ADAIKHLIPNLELKDGHLVYQIHHEVLSALFNLCKINKR), 1154–1191 (QAAENGIIPHLMLFIMSDSPLKQYALPLLCDMAHASRN), 1196–1234 (LRAHGGLDVYLSLLDDEYWSVIALDSIAVCLAQDNDNRK), 1258–1281 (RHFVHILEPFLKIITKSYRINKTL), 1282–1318 (AVNGLTPLLISRLDHQDAIARLNLLKLIKAVYEHHPR), and 1348–1368 (QVLVKQMATSLLKALHINTIL).

Belongs to the protein kinase superfamily. Ser/Thr protein kinase family. In terms of assembly, interacts with SGP1. Autophosphorylated. As to expression, expressed in both the sporophytic and the gametophytic tissues, especially in dividing cells. Mostly present in flower buds and mature flowers. Also accumulates in embryos, in roots apices, trichomes and ovule integuments.

The protein localises to the cytoplasm. It localises to the cytoskeleton. It is found in the microtubule organizing center. Its subcellular location is the nucleus. The protein resides in the nucleolus. The protein localises to the cell membrane. It carries out the reaction L-seryl-[protein] + ATP = O-phospho-L-seryl-[protein] + ADP + H(+). It catalyses the reaction L-threonyl-[protein] + ATP = O-phospho-L-threonyl-[protein] + ADP + H(+). Its function is as follows. Serine/threonine-protein kinase involved in the spatial and temporal control system organizing cortical activities in mitotic and postmitotic cells. Required for the normal functioning of the plasma membrane in developing pollen. Involved in the regulation of cell expansion, cell elongation, and embryo development. The sequence is that of MAP3K epsilon protein kinase 1 from Arabidopsis thaliana (Mouse-ear cress).